The sequence spans 414 residues: Methyl-CpG-binding domain protein 2 (414 aa).

A required for interaction with DHX9 and PRMT5 region spans residues 1 to 152 (MRAHPGGGRC…GPRATESGKR (152 aa)). Residues 1–163 (MRAHPGGGRC…DCPALPPGWK (163 aa)) form a disordered region. The span at 77 to 95 (GRGRGRGRGRGRGRGRGRG) shows a compositional bias: basic residues. Over residues 98–123 (QSGGSGLGGDGGGGAGGCGGGSGGGV) the composition is skewed to gly residues. Residues 148–216 (ESGKRMDCPA…SSFDFRTGKM (69 aa)) form the MBD domain. S184 is modified (phosphoserine). A disordered region spans residues 217–244 (MPSKLQKNKQRLRNDPLNQNKGKPDLNT). Residues 232 to 244 (PLNQNKGKPDLNT) show a composition bias toward polar residues. S410 bears the Phosphoserine mark.

Heterodimer with MBD3 (via N-terminus). Component of the MeCP1 complex that contains HDAC1 and HDAC2. Component of the nucleosome remodeling and deacetylase (NuRD) repressor complex, composed of core proteins MTA1, MTA2, MTA3, RBBP4, RBBP7, HDAC1, HDAC2, MBD2, MBD3, and peripherally associated proteins CDK2AP1, CDK2AP2, GATAD2A, GATAD2B, CHD3, CHD4 and CHD5. The exact stoichiometry of the NuRD complex is unknown, and some subunits such as MBD2 and MBD3, GATAD2A and GATAD2B, and CHD3, CHD4 and CHD5 define mutually exclusive NuRD complexes. Interacts with CDK2AP1. Interacts with DHX9. Interacts with DNMT1. Interacts with GATAD2A/p66-alpha. Interacts with GATAD2B/p66-beta. Interacts with GPN1. Interacts with MIZF. Interacts with PRMT5. Interacts with SIN3A. Interacts with SPHK2. Highly expressed in brain, heart, kidney, lung, skeletal muscle, spleen and testis. Detected at lower levels in embryonic stem cells.

The protein resides in the nucleus. It is found in the chromosome. Functionally, binds CpG islands in promoters where the DNA is methylated at position 5 of cytosine within CpG dinucleotides. Binds hemimethylated DNA as well. Recruits histone deacetylases and DNA methyltransferases to chromatin. Acts as a component of the histone deacetylase NuRD complex which participates in the remodeling of chromatin. Acts as transcriptional repressor and plays a role in gene silencing. Functions as a scaffold protein, targeting GATAD2A and GATAD2B to chromatin to promote repression. May enhance the activation of some unmethylated cAMP-responsive promoters. Selectively represses transcription activity of methylated rRNA promoters. This Mus musculus (Mouse) protein is Methyl-CpG-binding domain protein 2.